Consider the following 716-residue polypeptide: ATP-dependent DNA helicase DinG (716 aa).

The 278-residue stretch at alanine 17–threonine 294 folds into the Helicase ATP-binding domain. Residue alanine 54–threonine 61 coordinates ATP. Cysteine 120 is a [4Fe-4S] cluster binding site. A DEAH box motif is present at residues glutamate 131–glutamine 134. Residues cysteine 194, cysteine 199, and cysteine 205 each contribute to the [4Fe-4S] cluster site. Positions aspartate 248–histidine 251 match the DEAH box motif. The Helicase C-terminal domain occupies histidine 517 to proline 698.

This sequence belongs to the helicase family. DinG subfamily. Type 1 sub-subfamily. Requires [4Fe-4S] cluster as cofactor.

It carries out the reaction Couples ATP hydrolysis with the unwinding of duplex DNA at the replication fork by translocating in the 5'-3' direction. This creates two antiparallel DNA single strands (ssDNA). The leading ssDNA polymer is the template for DNA polymerase III holoenzyme which synthesizes a continuous strand.. It catalyses the reaction ATP + H2O = ADP + phosphate + H(+). DNA-dependent ATPase and 5'-3' DNA helicase. Unwinds D-loops, R-loops, forked DNA and G-quadruplex DNA. The protein is ATP-dependent DNA helicase DinG of Escherichia coli O157:H7.